Reading from the N-terminus, the 421-residue chain is ATP-dependent RNA helicase RhlB (421 aa).

Positions 9–37 match the Q motif motif; it reads QKFSDFALHPKVIEALENKGFHNCTPIQA. The region spanning 40-219 is the Helicase ATP-binding domain; that stretch reads LPLTLAGRDV…FEQMNNAEYV (180 aa). An ATP-binding site is contributed by 53-60; that stretch reads AQTGTGKT. The DEAD box signature appears at 165 to 168; that stretch reads DEAD. Residues 245–390 form the Helicase C-terminal domain; that stretch reads RLLQTLIEEE…VSKYNPEALM (146 aa). A disordered region spans residues 393 to 421; sequence LPKPLRLTRSRPGNGPRRTGAPRNRRRSG. Low complexity predominate over residues 403-414; the sequence is RPGNGPRRTGAP.

Belongs to the DEAD box helicase family. RhlB subfamily. As to quaternary structure, component of the RNA degradosome, which is a multiprotein complex involved in RNA processing and mRNA degradation.

It is found in the cytoplasm. The enzyme catalyses ATP + H2O = ADP + phosphate + H(+). Its function is as follows. DEAD-box RNA helicase involved in RNA degradation. Has RNA-dependent ATPase activity and unwinds double-stranded RNA. The sequence is that of ATP-dependent RNA helicase RhlB from Citrobacter koseri (strain ATCC BAA-895 / CDC 4225-83 / SGSC4696).